Consider the following 699-residue polypeptide: Dymeclin (699 aa).

Gly2 carries the N-myristoyl glycine lipid modification. Ser346 carries the phosphoserine modification.

This sequence belongs to the dymeclin family.

This chain is Dymeclin, found in Drosophila melanogaster (Fruit fly).